We begin with the raw amino-acid sequence, 338 residues long: Putative transposase for insertion sequence element IS4SA (338 aa).

Belongs to the transposase 11 family.

The protein is Putative transposase for insertion sequence element IS4SA of Synechocystis sp. (strain ATCC 27184 / PCC 6803 / Kazusa).